Consider the following 492-residue polypeptide: ATP synthase subunit beta, chloroplastic (492 aa).

An ATP-binding site is contributed by 170–177; that stretch reads GGAGVGKT.

It belongs to the ATPase alpha/beta chains family. F-type ATPases have 2 components, CF(1) - the catalytic core - and CF(0) - the membrane proton channel. CF(1) has five subunits: alpha(3), beta(3), gamma(1), delta(1), epsilon(1). CF(0) has four main subunits: a(1), b(1), b'(1) and c(9-12).

Its subcellular location is the plastid. The protein localises to the chloroplast thylakoid membrane. It carries out the reaction ATP + H2O + 4 H(+)(in) = ADP + phosphate + 5 H(+)(out). In terms of biological role, produces ATP from ADP in the presence of a proton gradient across the membrane. The catalytic sites are hosted primarily by the beta subunits. The sequence is that of ATP synthase subunit beta, chloroplastic from Angiopteris lygodiifolia (Turnip fern).